Here is a 300-residue protein sequence, read N- to C-terminus: tRNA-cytidine(32) 2-sulfurtransferase (300 aa).

Positions 41–46 match the PP-loop motif motif; sequence SGGKDS. Residues C116, C119, and C207 each coordinate [4Fe-4S] cluster.

It belongs to the TtcA family. Homodimer. The cofactor is Mg(2+). [4Fe-4S] cluster serves as cofactor.

It localises to the cytoplasm. It catalyses the reaction cytidine(32) in tRNA + S-sulfanyl-L-cysteinyl-[cysteine desulfurase] + AH2 + ATP = 2-thiocytidine(32) in tRNA + L-cysteinyl-[cysteine desulfurase] + A + AMP + diphosphate + H(+). The protein operates within tRNA modification. Catalyzes the ATP-dependent 2-thiolation of cytidine in position 32 of tRNA, to form 2-thiocytidine (s(2)C32). The sulfur atoms are provided by the cysteine/cysteine desulfurase (IscS) system. The polypeptide is tRNA-cytidine(32) 2-sulfurtransferase (Idiomarina loihiensis (strain ATCC BAA-735 / DSM 15497 / L2-TR)).